The primary structure comprises 319 residues: ATP-dependent 6-phosphofructokinase (319 aa).

Gly11 lines the ATP pocket. 21-25 (RAVVR) contributes to the ADP binding site. ATP-binding positions include 72-73 (RS) and 102-105 (GDGS). Asp103 contributes to the Mg(2+) binding site. 125–127 (TID) serves as a coordination point for substrate. Residue Asp127 is the Proton acceptor of the active site. An ADP-binding site is contributed by Arg154. Residues Arg162 and 169–171 (MGR) contribute to the substrate site. ADP-binding positions include 185 to 187 (GAE) and 213 to 215 (KMH). Residues Glu222, Arg243, and 249–252 (HIQR) contribute to the substrate site.

Belongs to the phosphofructokinase type A (PFKA) family. ATP-dependent PFK group I subfamily. Prokaryotic clade 'B1' sub-subfamily. In terms of assembly, homotetramer. It depends on Mg(2+) as a cofactor.

It localises to the cytoplasm. It carries out the reaction beta-D-fructose 6-phosphate + ATP = beta-D-fructose 1,6-bisphosphate + ADP + H(+). Its pathway is carbohydrate degradation; glycolysis; D-glyceraldehyde 3-phosphate and glycerone phosphate from D-glucose: step 3/4. Its activity is regulated as follows. Allosterically activated by ADP and other diphosphonucleosides, and allosterically inhibited by phosphoenolpyruvate. Functionally, catalyzes the phosphorylation of D-fructose 6-phosphate to fructose 1,6-bisphosphate by ATP, the first committing step of glycolysis. The chain is ATP-dependent 6-phosphofructokinase from Clostridium tetani (strain Massachusetts / E88).